The sequence spans 21 residues: Agglutinin beta-1 chain (21 aa).

The span at 1–10 shows a compositional bias: polar residues; that stretch reads NGPNGKSQSI. The disordered stretch occupies residues 1–21; it reads NGPNGKSQSIIVGPWGDRVTN.

This sequence belongs to the jacalin lectin family. Formed of four alpha chains and four beta chains.

In terms of biological role, D-galactose-specific lectin, binds the T-antigen structure Gal-beta1,3-GalNAc. The chain is Agglutinin beta-1 chain from Maclura pomifera (Osage orange).